The following is a 788-amino-acid chain: MITVVKRNGRIEPLDITKIQKYTKDATDNLEGVSQSELEVDARLQFRDKITTEEIQQTLIKTAVDKIDIDTPNWSFVASRLFLYDLYHKVSGFTGYRHLKEYFENAEEKGRILKGFKEKFDLEFLNSQIKPERDFQFNYLGIKTLYDRYLLKDANNHPIELPQHMFMSIAMFLAQNEQELNKIALEFYEVLSKFEAMCATPTLANARTTKHQLSSCYIGSTPDNIEGIFDSYKEMALLSKYGGGIGWDFSLVRSIGSYIDGHKNASAGTIPFLKIANDVAIAVDQLGTRKGAIAVYLEIWHIDVMEFIDLRKNSGDERRRAHDLFPALWVCDLFMKRVLEDAMWTLFDPYECKDLTELYGQDFEKRYLEYEKDPKIIKEYINAKDLWKKILMNYFEAGLPFLAFKDNANRCNPNAHAGIIRSSNLCTEIFQNTAPNHYYMQIEYTDGAIEFFEEKELVTTDSNITKCANKLTSTDILKGKKIYIATKVAKDGQTAVCNLASINLSKINTEEDIKRVVPIMVRLLDNVIDLNFYPNRKVKATNLQNRAIGLGVMGEAQMLAEHQIAWGSKEHLEKIDALMEQISYHAIDTSANLAKEKGVYKDFENSEWSKGIFPIDKANNEALKLTEKGLFNHACDWQGLREKVKANGMRNGYLMAIAPTSSISILVGTTQTIEPIYKKKWFEENLSGLIPVVVPNLNVETWNFYTSAYDIDAKDLIKAAAVRQKWIDQGQSINVFLRIENASGKTLHEIYTLAWKLGLKSTYYLRSESPSIDEKSVLDRSVECFNCQ.

The ATP-cone domain occupies 2-92 (ITVVKRNGRI…LYDLYHKVSG (91 aa)). Residues Lys-6, 12 to 18 (EPLDITK), and Thr-52 each bind ATP. Thr-200 serves as a coordination point for GDP. The cysteines at positions 216 and 497 are disulfide-linked. DTTP contacts are provided by residues 223–225 (DNI) and Arg-253. Asn-424 contacts GDP. The active-site Proton acceptor is the Asn-424. Cys-426 serves as the catalytic Cysteine radical intermediate. Residues Glu-428 and 661 to 663 (SSI) contribute to the GDP site. Glu-428 acts as the Proton acceptor in catalysis.

It belongs to the ribonucleoside diphosphate reductase large chain family. In terms of assembly, tetramer of two alpha and two beta subunits.

It carries out the reaction a 2'-deoxyribonucleoside 5'-diphosphate + [thioredoxin]-disulfide + H2O = a ribonucleoside 5'-diphosphate + [thioredoxin]-dithiol. Under complex allosteric control mediated by deoxynucleoside triphosphates and ATP binding to separate specificity and activation sites on the alpha subunit. The type of nucleotide bound at the specificity site determines substrate preference. It seems probable that ATP makes the enzyme reduce CDP and UDP, dGTP favors ADP reduction and dTTP favors GDP reduction. Stimulated by ATP and inhibited by dATP binding to the activity site. In terms of biological role, provides the precursors necessary for DNA synthesis. Catalyzes the biosynthesis of deoxyribonucleotides from the corresponding ribonucleotides. The chain is Ribonucleoside-diphosphate reductase subunit alpha (nrdA) from Helicobacter pylori (strain J99 / ATCC 700824) (Campylobacter pylori J99).